Here is a 406-residue protein sequence, read N- to C-terminus: 3-oxoacyl-[acyl-carrier-protein] synthase 1 (406 aa).

Residues 1–403 (MKRAVITGLG…GTNATLVMRK (403 aa)) enclose the Ketosynthase family 3 (KS3) domain. Catalysis depends on for beta-ketoacyl synthase activity residues cysteine 163, histidine 298, and histidine 333.

Belongs to the thiolase-like superfamily. Beta-ketoacyl-ACP synthases family. As to quaternary structure, homodimer.

It is found in the cytoplasm. The catalysed reaction is a fatty acyl-[ACP] + malonyl-[ACP] + H(+) = a 3-oxoacyl-[ACP] + holo-[ACP] + CO2. It carries out the reaction (3Z)-decenoyl-[ACP] + malonyl-[ACP] + H(+) = 3-oxo-(5Z)-dodecenoyl-[ACP] + holo-[ACP] + CO2. Its pathway is lipid metabolism; fatty acid biosynthesis. Functionally, involved in the type II fatty acid elongation cycle. Catalyzes the elongation of a wide range of acyl-ACP by the addition of two carbons from malonyl-ACP to an acyl acceptor. Can also use unsaturated fatty acids. Catalyzes a key reaction in unsaturated fatty acid (UFA) synthesis, the elongation of the cis-3-decenoyl-ACP produced by FabA. In Escherichia coli O6:H1 (strain CFT073 / ATCC 700928 / UPEC), this protein is 3-oxoacyl-[acyl-carrier-protein] synthase 1 (fabB).